The primary structure comprises 522 residues: 2-isopropylmalate synthase (522 aa).

The 263-residue stretch at 5-267 (VIIFDTTLRD…ETGINAKEIH (263 aa)) folds into the Pyruvate carboxyltransferase domain. Residues D14, H202, H204, and N238 each contribute to the Mn(2+) site. Residues 392–522 (QLQQLVVQSD…MQKNRELGGV (131 aa)) form a regulatory domain region.

Belongs to the alpha-IPM synthase/homocitrate synthase family. LeuA type 1 subfamily. In terms of assembly, homodimer. The cofactor is Mn(2+).

The protein localises to the cytoplasm. It carries out the reaction 3-methyl-2-oxobutanoate + acetyl-CoA + H2O = (2S)-2-isopropylmalate + CoA + H(+). It functions in the pathway amino-acid biosynthesis; L-leucine biosynthesis; L-leucine from 3-methyl-2-oxobutanoate: step 1/4. Catalyzes the condensation of the acetyl group of acetyl-CoA with 3-methyl-2-oxobutanoate (2-ketoisovalerate) to form 3-carboxy-3-hydroxy-4-methylpentanoate (2-isopropylmalate). This Shewanella putrefaciens (strain CN-32 / ATCC BAA-453) protein is 2-isopropylmalate synthase.